The chain runs to 125 residues: MAKYLAQIVVMGMQVVGRAFTRALRQEFAASKVAAEARGRAGTESAAVSSLSGISLQEAQQILNVSKLTPEEIQKNYEHLFKVNDKGLGGSFYLQSKVVRAKERLDQEMEIQSKTHKPKEETTQT.

The J-like stretch occupies residues 58 to 110 (EAQQILNVSKLTPEEIQKNYEHLFKVNDKGLGGSFYLQSKVVRAKERLDQEME).

The protein belongs to the TIM16/PAM16 family. As to quaternary structure, probable component of the PAM complex at least composed of 1 mitochondrial HSP70 protein, 1 GRPE, 1 TIMM44, 1 TIMM16/PAM16 and 1 TIMM14. Associates with the TIM23 complex.

It is found in the mitochondrion inner membrane. Functionally, regulates ATP-dependent protein translocation into the mitochondrial matrix. The chain is Mitochondrial import inner membrane translocase subunit tim16-A (pam16-a) from Xenopus laevis (African clawed frog).